A 485-amino-acid chain; its full sequence is GTPase Der (485 aa).

EngA-type G domains follow at residues 3–167 (PTIA…PEPE) and 176–349 (PVFA…NAAM). Residues 9-16 (GRPNVGKS), 56-60 (DTGGF), 119-122 (NKGE), 182-189 (GRPNVGKS), 229-233 (DTAGV), and 294-297 (NKWD) each bind GTP. The KH-like domain maps to 350-434 (IKMPTPKITR…PLRIQYNVSE (85 aa)). Positions 435–485 (NPYENAEDKPKKKPLRRVSLSNRIEKREGRKEEKNRFKKKTKVSVKKQFSK) are disordered. The span at 457–469 (RIEKREGRKEEKN) shows a compositional bias: basic and acidic residues. A compositionally biased stretch (basic residues) spans 470 to 485 (RFKKKTKVSVKKQFSK).

It belongs to the TRAFAC class TrmE-Era-EngA-EngB-Septin-like GTPase superfamily. EngA (Der) GTPase family. As to quaternary structure, associates with the 50S ribosomal subunit.

GTPase that plays an essential role in the late steps of ribosome biogenesis. The protein is GTPase Der of Neisseria gonorrhoeae (strain NCCP11945).